The primary structure comprises 1004 residues: Receptor-type tyrosine-protein phosphatase N2 (1004 aa).

The signal sequence occupies residues 1-27; sequence MGLPLPLLLLLLLPPPLPRALPAPASA. The tract at residues 1-409 is involved in localization to secretory granules; interaction with CPE; sequence MGLPLPLLLL…PEAPLLEKSS (409 aa). Topologically, residues 28–603 are extracellular; sequence RGRQLPGRLG…HPEEQEDSTK (576 aa). R259 carries the omega-N-methylarginine modification. 3 disordered regions span residues 274–294, 333–360, and 393–459; these read APALSQRWPLPPGDSKDSLSM, QSDPVEGSQESHGRGAEGQLREQADAPE, and DHGS…WRLE. S340 carries the post-translational modification Phosphoserine. 2 stretches are compositionally biased toward basic and acidic residues: residues 341–356 and 407–418; these read QESHGRGAEGQLREQA and KSSRAEMKKSEQ. Residues 419 to 430 show a composition bias toward acidic residues; that stretch reads PEEVLSSEEETA. S424 and S425 each carry phosphoserine. The segment covering 431–450 has biased composition (basic and acidic residues); it reads GVEHVKSRTYSKDLLERKPN. Residue N553 is glycosylated (N-linked (GlcNAc...) asparagine). Residues 604 to 624 traverse the membrane as a helical segment; it reads FIVLTFLSIACILAVLLASSL. The Cytoplasmic segment spans residues 625 to 1004; that stretch reads AYCLRHNSHY…VNAILKALPQ (380 aa). The short motif at 655 to 664 is the Tyrosine-based internalization motif element; sequence YQELCRQRMA. The interval 665–710 is disordered; sequence VRPQDHSEGPHTSRINSVSSQLSDGPMPSPSARSSTSSWSEEPAQS. Polar residues predominate over residues 677-687; it reads SRINSVSSQLS. Phosphoserine; by PKA is present on S681. At S687 the chain carries Phosphoserine. Positions 694 to 710 are enriched in low complexity; sequence PSARSSTSSWSEEPAQS. A Phosphothreonine; by PKA modification is found at T700. One can recognise a Tyrosine-protein phosphatase domain in the interval 734–994; that stretch reads LEKEWEALCA…EFALTAVAEE (261 aa). Residues D902 and 934–940 contribute to the substrate site; that span reads CSDGAGR. C934 functions as the Phosphocysteine intermediate in the catalytic mechanism. An N6-acetyllysine modification is found at K959. Q979 serves as a coordination point for substrate. A Leucine-based sorting signal motif is present at residues 993 to 999; that stretch reads EEVNAIL.

It belongs to the protein-tyrosine phosphatase family. Receptor class 8 subfamily. As to quaternary structure, self-associates. Interacts (via cytoplasmic domain) with PTPRN (via cytoplasmic domain). Interacts (precursor form) with CPE. Interacts with HAP1. Interacts with AP2A1 or AP2A2 and AP1G1; indicative for an association with adaptor protein complex 2 (AP-2) and adaptor protein complex 1 (AP-1). Interacts with AP2M1; indicative for an association with adaptor protein complex 2 (AP-2). Interacts with MYO5A. Post-translationally, subject to proteolytic cleavage at multiple sites.

It is found in the cytoplasmic vesicle. It localises to the secretory vesicle membrane. The protein localises to the secretory vesicle. Its subcellular location is the synaptic vesicle membrane. It catalyses the reaction O-phospho-L-tyrosyl-[protein] + H2O = L-tyrosyl-[protein] + phosphate. Functionally, plays a role in vesicle-mediated secretory processes. Required for normal accumulation of secretory vesicles in hippocampus, pituitary and pancreatic islets. Required for the accumulation of normal levels of insulin-containing vesicles and preventing their degradation. Plays a role in insulin secretion in response to glucose stimuli. Required for normal accumulation of the neurotransmitters norepinephrine, dopamine and serotonin in the brain. In females, but not in males, required for normal accumulation and secretion of pituitary hormones, such as luteinizing hormone (LH) and follicle-stimulating hormone (FSH). Required to maintain normal levels of renin expression and renin release. May regulate catalytic active protein-tyrosine phosphatases such as PTPRA through dimerization. Has phosphatidylinositol phosphatase activity; the PIPase activity is involved in its ability to regulate insulin secretion. Can dephosphorylate phosphatidylinositol 4,5-biphosphate, phosphatidylinositol 5-phosphate and phosphatidylinositol 3-phosphate. Regulates PI(4,5)P2 level in the plasma membrane and localization of cofilin at the plasma membrane and thus is indirectly involved in regulation of actin dynamics related to cell migration and metastasis; upon hydrolysis of PI(4,5)P2 cofilin is released from the plasma membrane and acts in the cytoplasm in severing F-actin filaments. The protein is Receptor-type tyrosine-protein phosphatase N2 (Ptprn2) of Rattus norvegicus (Rat).